A 443-amino-acid chain; its full sequence is UPF0597 protein DVU_0440 (443 aa).

The protein belongs to the UPF0597 family.

This is UPF0597 protein DVU_0440 from Nitratidesulfovibrio vulgaris (strain ATCC 29579 / DSM 644 / CCUG 34227 / NCIMB 8303 / VKM B-1760 / Hildenborough) (Desulfovibrio vulgaris).